Reading from the N-terminus, the 545-residue chain is Chaperonin GroEL (545 aa).

ATP is bound by residues 30-33 (TMGP), Lys51, 87-91 (DGTTT), Gly415, and Asp494.

It belongs to the chaperonin (HSP60) family. Forms a cylinder of 14 subunits composed of two heptameric rings stacked back-to-back. Interacts with the co-chaperonin GroES.

It is found in the cytoplasm. It catalyses the reaction ATP + H2O + a folded polypeptide = ADP + phosphate + an unfolded polypeptide.. In terms of biological role, together with its co-chaperonin GroES, plays an essential role in assisting protein folding. The GroEL-GroES system forms a nano-cage that allows encapsulation of the non-native substrate proteins and provides a physical environment optimized to promote and accelerate protein folding. In Helicobacter hepaticus (strain ATCC 51449 / 3B1), this protein is Chaperonin GroEL.